The following is a 253-amino-acid chain: tRNA pseudouridine synthase A (253 aa).

D51 acts as the Nucleophile in catalysis. Y110 provides a ligand contact to substrate.

This sequence belongs to the tRNA pseudouridine synthase TruA family. Homodimer.

It carries out the reaction uridine(38/39/40) in tRNA = pseudouridine(38/39/40) in tRNA. Its function is as follows. Formation of pseudouridine at positions 38, 39 and 40 in the anticodon stem and loop of transfer RNAs. The sequence is that of tRNA pseudouridine synthase A from Wolinella succinogenes (strain ATCC 29543 / DSM 1740 / CCUG 13145 / JCM 31913 / LMG 7466 / NCTC 11488 / FDC 602W) (Vibrio succinogenes).